The chain runs to 172 residues: uncharacterized protein (172 aa).

The next 3 helical transmembrane spans lie at 7 to 27 (ILIS…CYGI), 59 to 79 (LMIF…LYLF), and 89 to 109 (FSLT…LFVK).

This sequence to M.jannaschii MJ0695.

It is found in the cell membrane. This is an uncharacterized protein from Methanocaldococcus jannaschii (strain ATCC 43067 / DSM 2661 / JAL-1 / JCM 10045 / NBRC 100440) (Methanococcus jannaschii).